Reading from the N-terminus, the 82-residue chain is RNA-binding protein TTE2299 (82 aa).

This sequence belongs to the eukaryotic ribosomal protein eL8 family.

This is RNA-binding protein TTE2299 from Caldanaerobacter subterraneus subsp. tengcongensis (strain DSM 15242 / JCM 11007 / NBRC 100824 / MB4) (Thermoanaerobacter tengcongensis).